We begin with the raw amino-acid sequence, 123 residues long: U9-barytoxin-Tl1a (123 aa).

An N-terminal signal peptide occupies residues 1–18 (MNTMITFLVLFVLTAANG). Residues 19–77 (APEANERKIPEAIHNEDQSLAEMAEELMFFLQQTEFEAPLLQEEEEAEXAEXRNSRERR) constitute a propeptide that is removed on maturation. 3 cysteine pairs are disulfide-bonded: cysteine 78–cysteine 93, cysteine 85–cysteine 98, and cysteine 92–cysteine 112.

It belongs to the neurotoxin 14 (magi-1) family. 05 (ICK-7) subfamily. ICK-7 sub-subfamily. In terms of tissue distribution, expressed by the venom gland.

It is found in the secreted. Its function is as follows. Ion channel inhibitor. The sequence is that of U9-barytoxin-Tl1a from Trittame loki (Brush-footed trapdoor spider).